A 390-amino-acid chain; its full sequence is GTPase Obg (390 aa).

One can recognise an Obg domain in the interval methionine 1–leucine 159. Residues asparagine 127–glycine 147 form a disordered region. Residues arginine 129 to threonine 145 show a composition bias toward polar residues. Residues alanine 160–isoleucine 333 enclose the OBG-type G domain. GTP is bound by residues glycine 166 to serine 173, phenylalanine 191 to valine 195, aspartate 213 to glycine 216, asparagine 283 to aspartate 286, and serine 314 to alanine 316. Positions 173 and 193 each coordinate Mg(2+).

The protein belongs to the TRAFAC class OBG-HflX-like GTPase superfamily. OBG GTPase family. In terms of assembly, monomer. The cofactor is Mg(2+).

The protein localises to the cytoplasm. Its function is as follows. An essential GTPase which binds GTP, GDP and possibly (p)ppGpp with moderate affinity, with high nucleotide exchange rates and a fairly low GTP hydrolysis rate. Plays a role in control of the cell cycle, stress response, ribosome biogenesis and in those bacteria that undergo differentiation, in morphogenesis control. In Escherichia coli O7:K1 (strain IAI39 / ExPEC), this protein is GTPase Obg.